An 839-amino-acid polypeptide reads, in one-letter code: MDCYTANWNPLGDSAFYRKYELYSMDWDLKEELKDCLVAAAPYGGPIALLRNCWRKEKAASVRPVLEIYSASGLPLASLLWKSGPVVALGWSAEEELLCVQEDGAVLVYGLHGDFRRHFSMGNEVLQNRVLDARIFHTEFGSGVAILTGAYRFTLSANVGDLKLRRMPEVPGLQSAPSCWTTLCHDRVPHILLAVGPDLYLLDHATCSAVTPAGLAPGVSSFLQMAVSFTYRYLALFTDTGYIWMGTASLKEKLCEFNCNIRAPPKQMVWCSRPRSKERAVVVAWERRLMVVGNAPESIQFVLDEDSYLVPELDGVRIFSRSTHEFLHEVPVASEEIFKIASMAPGALLLEAQKEYEKESQKADEYLREIQELGQLIQAVQQCIEAAGHEHQPDMQKSLLRAASFGKCFLDRFPPDSFVHMCQDLRVLNAIRDYHIGIPLTYTQYKQLTIQVLLDRLVLRRLYPLAIQICEYLRLPEVQGVSRILAHWACYKARAWDMRDEDVARAINQKLGDTPGVSYSDIAARAYGCGRTELAIKLLEYEPRSGEQVPLLLKMKRSKLALSKAIESGDTDLVFTVLLHLKNELNRGDFFMTLRNQPMALSLYRQFCKHQELDTLKDLYNQDDNHQELGSFHIRASYAAEERIEGRVAALQTAADAFYKAKNEFAAKATEDQMRLLRIQRRLEDELGGRFLDLSLHDTVTTLILGGHNKRAEQLARDFRIPDKRLWWLKLAALADLEDWEELEKFSKSKKSPIGYLPFVEICMKQHNKHEAKKYASRVGPEQKVKALLLVGDVAQAAEVAIEHRNETELSLVLSHCTGATDGAIADKIQRARAQAQKK.

Tyr4 is subject to 3'-nitrotyrosine. The segment at 642–736 (ERIEGRVAAL…WWLKLAALAD (95 aa)) is interaction with VPS33A.

This sequence belongs to the VPS16 family. In terms of assembly, core component of at least two putative endosomal tethering complexes, the homotypic fusion and vacuole protein sorting (HOPS) complex and the class C core vacuole/endosome tethering (CORVET) complex. Their common core is composed of the class C Vps proteins VPS11, VPS16, VPS18 and VPS33A, which in HOPS further associates with VPS39 and VPS41 and in CORVET with VPS8 and TGFBRAP1. Interacts with RAB5C. Interacts with STX17, MON1B. Associates with adapter protein complex 3 (AP-3) and clathrin:AP-3 complexes.

The protein localises to the late endosome membrane. It is found in the lysosome membrane. The protein resides in the early endosome. It localises to the cytoplasmic vesicle. Its subcellular location is the clathrin-coated vesicle. The protein localises to the autophagosome. In terms of biological role, plays a role in vesicle-mediated protein trafficking to lysosomal compartments including the endocytic membrane transport and autophagic pathways. Believed to act as a core component of the putative HOPS and CORVET endosomal tethering complexes which are proposed to be involved in the Rab5-to-Rab7 endosome conversion probably implicating MON1A/B, and via binding SNAREs and SNARE complexes to mediate tethering and docking events during SNARE-mediated membrane fusion. The HOPS complex is proposed to be recruited to Rab7 on the late endosomal membrane and to regulate late endocytic, phagocytic and autophagic traffic towards lysosomes. The CORVET complex is proposed to function as a Rab5 effector to mediate early endosome fusion probably in specific endosome subpopulations. Required for recruitment of VPS33A to the HOPS complex. Required for fusion of endosomes and autophagosomes with lysosomes; the function is dependent on its association with VPS33A but not VPS33B. The function in autophagosome-lysosome fusion implicates STX17 but not UVRAG. The protein is Vacuolar protein sorting-associated protein 16 homolog (Vps16) of Mus musculus (Mouse).